The chain runs to 130 residues: Odontogenesis associated phosphoprotein (130 aa).

The first 23 residues, 1–23, serve as a signal peptide directing secretion; sequence MARRHCFSYWLLVCWLVVTVAEG.

Highly expressed in placenta.

It localises to the secreted. May promote nucleation of hydroxyapatite. In Homo sapiens (Human), this protein is Odontogenesis associated phosphoprotein.